The sequence spans 311 residues: Homoserine kinase (311 aa).

96-106 is a binding site for ATP; it reads PLARGLGSSAA.

The protein belongs to the GHMP kinase family. Homoserine kinase subfamily.

The protein localises to the cytoplasm. It carries out the reaction L-homoserine + ATP = O-phospho-L-homoserine + ADP + H(+). It functions in the pathway amino-acid biosynthesis; L-threonine biosynthesis; L-threonine from L-aspartate: step 4/5. Catalyzes the ATP-dependent phosphorylation of L-homoserine to L-homoserine phosphate. The polypeptide is Homoserine kinase (Natranaerobius thermophilus (strain ATCC BAA-1301 / DSM 18059 / JW/NM-WN-LF)).